The sequence spans 226 residues: PKHD-type hydroxylase PP_0862 (226 aa).

Residues 78–178 (KVFPPLINCY…RYAAFFWTQS (101 aa)) form the Fe2OG dioxygenase domain. 3 residues coordinate Fe cation: His96, Asp98, and His159. Arg169 is a 2-oxoglutarate binding site.

Fe(2+) is required as a cofactor. It depends on L-ascorbate as a cofactor.

The polypeptide is PKHD-type hydroxylase PP_0862 (Pseudomonas putida (strain ATCC 47054 / DSM 6125 / CFBP 8728 / NCIMB 11950 / KT2440)).